Here is a 119-residue protein sequence, read N- to C-terminus: Holo-[acyl-carrier-protein] synthase (119 aa).

Mg(2+) is bound by residues D5 and E51.

It belongs to the P-Pant transferase superfamily. AcpS family. Mg(2+) is required as a cofactor.

The protein resides in the cytoplasm. The enzyme catalyses apo-[ACP] + CoA = holo-[ACP] + adenosine 3',5'-bisphosphate + H(+). Transfers the 4'-phosphopantetheine moiety from coenzyme A to a Ser of acyl-carrier-protein. The protein is Holo-[acyl-carrier-protein] synthase of Helicobacter pylori (strain ATCC 700392 / 26695) (Campylobacter pylori).